The sequence spans 372 residues: Embryonic growth/differentiation factor 1 (372 aa).

The N-terminal stretch at 1–29 (MPPPQQGPCGHHLLLLLALLLPSLPLTRA) is a signal peptide. Residues 30 to 253 (PVPPGPAAAL…LCHPLARPRR (224 aa)) constitute a propeptide that is removed on maturation. The segment at 67-86 (RRRDPQETRSGSRRTSPGVT) is disordered. N-linked (GlcNAc...) asparagine glycosylation is present at Asn-206. 3 disulfide bridges follow: Cys-267/Cys-337, Cys-296/Cys-369, and Cys-300/Cys-371.

It belongs to the TGF-beta family. In terms of assembly, homodimer; disulfide-linked. In terms of tissue distribution, expressed in the brain.

It is found in the secreted. Its function is as follows. May mediate cell differentiation events during embryonic development. The protein is Embryonic growth/differentiation factor 1 (GDF1) of Homo sapiens (Human).